A 344-amino-acid chain; its full sequence is Rho guanine nucleotide exchange factor 39 (344 aa).

The DH domain occupies 22–197 (KRVCTARELL…SETAQKVHAI (176 aa)). The region spanning 227-331 (WFLRQGWLLV…WHHSLTLAIR (105 aa)) is the PH domain.

It is found in the cell membrane. In terms of biological role, promotes cell proliferation. This Mus musculus (Mouse) protein is Rho guanine nucleotide exchange factor 39 (Arhgef39).